Consider the following 292-residue polypeptide: MLRRMNTFSGQKLAAVVKELENFAPTSWAEKWDNVGLLIEPHREKQIKKILLTNDLTEPVVKEALEKEAELIISYHPPIFKPLTRITQSHWKERVVAACLANDIALYSPHTAWDKKSGGVNDWLSKAVNIISIRPLEPELGAPPGTGSGRYIETKMELSQVVESLQKRIRNSVHVALAVGHTPKTLIQSVGICAGSGASLLKGIQADLIITGEMSHHEVLEFTHNNTTVLLCNHSNSERGFLHEFCPILAKSLNEECLVFVSEVDKDPLVTVASDINKELSAFVDVYKSTSK.

The protein belongs to the GTP cyclohydrolase I type 2/NIF3 family.

This chain is NIF3-like protein 1 (anon-35F/36A), found in Drosophila melanogaster (Fruit fly).